Consider the following 582-residue polypeptide: Zinc finger protein 614 (582 aa).

A KRAB domain is found at 8–79 (LTLEDVAVEF…VAKIQNKNCP (72 aa)). The C2H2-type 1 zinc-finger motif lies at 202–224 (HACIECEQTFLRKSQLIYHENIH). A C2H2-type 2; degenerate zinc finger spans residues 254 to 278 (KICIPNEYRKGSTVNSRLIAHQQTH). 10 consecutive C2H2-type zinc fingers follow at residues 284-306 (YMCS…QRTH), 312-334 (YVCN…QRTH), 340-362 (YICS…QRTH), 368-390 (YICS…QRSH), 396-418 (YICS…QRTH), 424-446 (YICN…QRTH), 452-474 (YECN…ERCH), 480-502 (FVCT…QRIH), 508-530 (YECN…QRTH), and 536-558 (YGCS…KKMH).

It belongs to the krueppel C2H2-type zinc-finger protein family.

Its subcellular location is the nucleus. Functionally, may be involved in transcriptional regulation. In Macaca fascicularis (Crab-eating macaque), this protein is Zinc finger protein 614 (ZNF614).